A 248-amino-acid chain; its full sequence is Sperm-specific protein Don juan (248 aa).

Residues 82-147 (KEGNQDELEN…EKKTKCAKKD (66 aa)) are a coiled coil. The segment at 146–200 (KDPCKKKDPCKKKDPCKKKDPCKKKDPCKKKDPCKKKDPCKKKDPCKKKGGDLKK) is disordered. 8 tandem repeats follow at residues 147–152 (DPCKKK), 153–158 (DPCKKK), 159–164 (DPCKKK), 165–170 (DPCKKK), 171–176 (DPCKKK), 177–182 (DPCKKK), 183–188 (DPCKKK), and 189–194 (DPCKKK). The 8 X 6 AA tandem repeat of D-P-C-K-K-K stretch occupies residues 147–194 (DPCKKKDPCKKKDPCKKKDPCKKKDPCKKKDPCKKKDPCKKKDPCKKK). The stretch at 197–244 (DLKKKCKKLAEKEKCKKLAKKEKMKKLQKKCKKMAQKEKCKKMAKKDK) forms a coiled coil.

As to expression, expression limited to post-meiotic male germ cells. Expressed in elongated spermatids during individualization and in finally elongated nuclei of spermatids. After completion of nuclear shaping it is no longer expressed in the sperm heads with the onset of individualization.

The protein resides in the nucleus. The protein localises to the mitochondrion. Functionally, may be involved in the final steps of mitochondrial differentiation within the flagellum. The protein is Sperm-specific protein Don juan (dj) of Drosophila melanogaster (Fruit fly).